A 361-amino-acid polypeptide reads, in one-letter code: Phospho-N-acetylmuramoyl-pentapeptide-transferase (361 aa).

10 helical membrane-spanning segments follow: residues 27 to 47, 70 to 90, 97 to 117, 134 to 154, 167 to 187, 199 to 219, 236 to 256, 263 to 283, 288 to 308, and 338 to 358; these read ILASLTALIVGLLCGPLMIRW, GTPTMGGVLILLAITVSCLLW, SLWLVLLVTLANGLVGWVDDY, YFWQSVIALVAVSYLYWNASL, TVTWDLGVFFPVLAYFVIVGS, GLAIMPIVMVAGALGVFAYAS, TGELTIFCSSIVGAGLGFLWY, VFMGDVGSLALGAALGIVAIV, LVLLIMGGLFVIETLSVILQV, and KVIVRFWIITVVFVLCGLATL.

It belongs to the glycosyltransferase 4 family. MraY subfamily. Requires Mg(2+) as cofactor.

It is found in the cell inner membrane. The catalysed reaction is UDP-N-acetyl-alpha-D-muramoyl-L-alanyl-gamma-D-glutamyl-meso-2,6-diaminopimeloyl-D-alanyl-D-alanine + di-trans,octa-cis-undecaprenyl phosphate = di-trans,octa-cis-undecaprenyl diphospho-N-acetyl-alpha-D-muramoyl-L-alanyl-D-glutamyl-meso-2,6-diaminopimeloyl-D-alanyl-D-alanine + UMP. It participates in cell wall biogenesis; peptidoglycan biosynthesis. Catalyzes the initial step of the lipid cycle reactions in the biosynthesis of the cell wall peptidoglycan: transfers peptidoglycan precursor phospho-MurNAc-pentapeptide from UDP-MurNAc-pentapeptide onto the lipid carrier undecaprenyl phosphate, yielding undecaprenyl-pyrophosphoryl-MurNAc-pentapeptide, known as lipid I. The chain is Phospho-N-acetylmuramoyl-pentapeptide-transferase from Legionella pneumophila (strain Paris).